The following is a 354-amino-acid chain: Protein-arginine kinase (354 aa).

The 231-residue stretch at 24–254 (IVLSSRIRLA…QQIIQQEKMA (231 aa)) folds into the Phosphagen kinase C-terminal domain. Residues 27–31 (SSRIR), His92, Arg125, 176–180 (RASVM), and 207–212 (RGIYGE) contribute to the ATP site. Residues 337–342 (RDYRRA) carry the RDXXRA motif of the pArg binding pocket involved in allosteric regulation motif.

The protein belongs to the ATP:guanido phosphotransferase family.

The catalysed reaction is L-arginyl-[protein] + ATP = N(omega)-phospho-L-arginyl-[protein] + ADP + H(+). Appears to be allosterically activated by the binding of pArg-containing polypeptides to the pArg-binding pocket localized in the C-terminal domain of McsB. Catalyzes the specific phosphorylation of arginine residues in a large number of proteins. Is part of the bacterial stress response system. Protein arginine phosphorylation has a physiologically important role and is involved in the regulation of many critical cellular processes, such as protein homeostasis, motility, competence, and stringent and stress responses, by regulating gene expression and protein activity. The chain is Protein-arginine kinase from Bacillus cereus (strain ATCC 10987 / NRS 248).